The chain runs to 48 residues: Acidic phospholipase A2 (48 aa).

Ca(2+)-binding residues include tyrosine 27, glycine 29, and glycine 31. A disulfide bridge links cysteine 28 with cysteine 44. Residue histidine 47 is part of the active site. Aspartate 48 is a Ca(2+) binding site.

Belongs to the phospholipase A2 family. Group II subfamily. D49 sub-subfamily. As to quaternary structure, monomer. Requires Ca(2+) as cofactor. As to expression, expressed by the venom gland.

It is found in the secreted. The catalysed reaction is a 1,2-diacyl-sn-glycero-3-phosphocholine + H2O = a 1-acyl-sn-glycero-3-phosphocholine + a fatty acid + H(+). With respect to regulation, inhibited by EDTA. Inhibited by Ba(2+), Cu(+), Fe(2+) and Zn(2+) ions and, to a lesser extent, by Mn(2+) and Mg(2+) ions. Functionally, snake venom phospholipase A2 (PLA2) that shows myotoxicity and induces paw edema in mice. Exhibits indirect hemolytic activity. Inhibits platelet aggregation induced by ADP and collagen. PLA2 catalyzes the calcium-dependent hydrolysis of the 2-acyl groups in 3-sn-phosphoglycerides. The chain is Acidic phospholipase A2 from Bothrops pauloensis (Neuwied's lancehead).